Consider the following 173-residue polypeptide: Adenine phosphoribosyltransferase (173 aa).

Belongs to the purine/pyrimidine phosphoribosyltransferase family. As to quaternary structure, homodimer.

The protein resides in the cytoplasm. It catalyses the reaction AMP + diphosphate = 5-phospho-alpha-D-ribose 1-diphosphate + adenine. It functions in the pathway purine metabolism; AMP biosynthesis via salvage pathway; AMP from adenine: step 1/1. Catalyzes a salvage reaction resulting in the formation of AMP, that is energically less costly than de novo synthesis. The polypeptide is Adenine phosphoribosyltransferase (Petrotoga mobilis (strain DSM 10674 / SJ95)).